Here is a 114-residue protein sequence, read N- to C-terminus: Histone H3-3 (114 aa).

Residues 1–17 are compositionally biased toward basic residues; sequence NTGGKAPRKHIAHKQAK. The tract at residues 1–32 is disordered; it reads NTGGKAPRKHIAHKQAKKSSAAAATGGVKKPH. Residues 18 to 28 show a composition bias toward low complexity; sequence KSSAAAATGGV.

It belongs to the histone H3 family. In terms of assembly, the nucleosome is a histone octamer containing two molecules each of H2A, H2B, H3 and H4 assembled in one H3-H4 heterotetramer and two H2A-H2B heterodimers. The octamer wraps approximately 147 bp of DNA.

The protein resides in the nucleus. It is found in the chromosome. Its function is as follows. Core component of nucleosome. Nucleosomes wrap and compact DNA into chromatin, limiting DNA accessibility to the cellular machineries which require DNA as a template. Histones thereby play a central role in transcription regulation, DNA repair, DNA replication and chromosomal stability. DNA accessibility is regulated via a complex set of post-translational modifications of histones, also called histone code, and nucleosome remodeling. The sequence is that of Histone H3-3 (H3-3) from Stylonychia lemnae (Ciliate).